A 493-amino-acid polypeptide reads, in one-letter code: Glutamyl-tRNA(Gln) amidotransferase subunit A (493 aa).

Catalysis depends on charge relay system residues Lys78 and Ser158. The active-site Acyl-ester intermediate is Ser182.

This sequence belongs to the amidase family. GatA subfamily. In terms of assembly, heterotrimer of A, B and C subunits.

The catalysed reaction is L-glutamyl-tRNA(Gln) + L-glutamine + ATP + H2O = L-glutaminyl-tRNA(Gln) + L-glutamate + ADP + phosphate + H(+). Functionally, allows the formation of correctly charged Gln-tRNA(Gln) through the transamidation of misacylated Glu-tRNA(Gln) in organisms which lack glutaminyl-tRNA synthetase. The reaction takes place in the presence of glutamine and ATP through an activated gamma-phospho-Glu-tRNA(Gln). In Rickettsia typhi (strain ATCC VR-144 / Wilmington), this protein is Glutamyl-tRNA(Gln) amidotransferase subunit A.